We begin with the raw amino-acid sequence, 61 residues long: ATP synthase subunit J, mitochondrial (61 aa).

A helical transmembrane segment spans residues 13–32 (LVKYYWPFFVGFGLTFYGVA).

As to quaternary structure, F-type ATP synthases have 2 components, the catalytic core F(1) and the membrane-embedded component F(0), linked together by a central stalk and a peripheral stalk. The central stalk, also called rotor shaft, is often seen as part of F(1). The peripheral stalk is seen as part of F(0). F(0) contains the membrane channel next to the rotor. F-type ATP synthases form dimers but each monomer functions independently in ATP generation. The dimer consists of 18 different polypeptides: ATP1 (subunit alpha, part of F(1), 3 molecules per monomer), ATP2 (subunit beta, part of F(1), 3 molecules per monomer), ATP3 (subunit gamma, part of the central stalk), ATP4 (subunit b, part of the peripheral stalk), ATP5/OSCP (subunit 5/OSCP, part of the peripheral stalk), ATP6 (subunit a, part of the peripheral stalk), ATP7 (subunit d, part of the peripheral stalk), ATP8 (subunit 8, part of the peripheral stalk), OLI1 (subunit c, part of the rotor, 10 molecules per monomer), ATP14 (subunit h, part of the peripheral stalk), ATP15 (subunit epsilon, part of the central stalk), ATP16 (subunit delta, part of the central stalk), ATP17 (subunit f, part of the peripheral stalk), ATP18 (subunit i/j, part of the peripheral stalk). Dimer-specific subunits are ATP19 (subunit k, at interface between monomers), ATP20 (subunit g, at interface between monomers), TIM11 (subunit e, at interface between monomers). Also contains subunit L.

The protein localises to the mitochondrion inner membrane. In terms of biological role, mitochondrial membrane ATP synthase (F(1)F(0) ATP synthase or Complex V) produces ATP from ADP in the presence of a proton gradient across the membrane which is generated by electron transport complexes of the respiratory chain. F-type ATP synthases consist of two structural domains, F(1) - containing the extramembraneous catalytic core, and F(0) - containing the membrane proton channel, linked together by a central stalk and a peripheral stalk. During catalysis, ATP synthesis in the catalytic domain of F(1) is coupled via a rotary mechanism of the central stalk subunits to proton translocation. Part of the complex F(0) domain. Minor subunit located with subunit a/ATP6 in the membrane. The sequence is that of ATP synthase subunit J, mitochondrial from Pichia angusta (Yeast).